Reading from the N-terminus, the 605-residue chain is Elongation factor 4 (605 aa).

A tr-type G domain is found at Lys11–Gln193. GTP is bound by residues Asp23–Thr28 and Asn140–Asp143.

The protein belongs to the TRAFAC class translation factor GTPase superfamily. Classic translation factor GTPase family. LepA subfamily.

The protein localises to the cell membrane. It catalyses the reaction GTP + H2O = GDP + phosphate + H(+). Its function is as follows. Required for accurate and efficient protein synthesis under certain stress conditions. May act as a fidelity factor of the translation reaction, by catalyzing a one-codon backward translocation of tRNAs on improperly translocated ribosomes. Back-translocation proceeds from a post-translocation (POST) complex to a pre-translocation (PRE) complex, thus giving elongation factor G a second chance to translocate the tRNAs correctly. Binds to ribosomes in a GTP-dependent manner. The polypeptide is Elongation factor 4 (Onion yellows phytoplasma (strain OY-M)).